Reading from the N-terminus, the 130-residue chain is Iron-sulfur cluster insertion protein ErpA 2 (130 aa).

Cys58, Cys122, and Cys124 together coordinate iron-sulfur cluster.

The protein belongs to the HesB/IscA family. In terms of assembly, homodimer. The cofactor is iron-sulfur cluster.

In terms of biological role, required for insertion of 4Fe-4S clusters for at least IspG. In Methylococcus capsulatus (strain ATCC 33009 / NCIMB 11132 / Bath), this protein is Iron-sulfur cluster insertion protein ErpA 2.